A 198-amino-acid polypeptide reads, in one-letter code: Nucleoside triphosphate pyrophosphatase (198 aa).

The Proton acceptor role is filled by Asp70.

The protein belongs to the Maf family. The cofactor is a divalent metal cation.

The protein localises to the cytoplasm. It carries out the reaction a ribonucleoside 5'-triphosphate + H2O = a ribonucleoside 5'-phosphate + diphosphate + H(+). The enzyme catalyses a 2'-deoxyribonucleoside 5'-triphosphate + H2O = a 2'-deoxyribonucleoside 5'-phosphate + diphosphate + H(+). In terms of biological role, nucleoside triphosphate pyrophosphatase. May have a dual role in cell division arrest and in preventing the incorporation of modified nucleotides into cellular nucleic acids. The sequence is that of Nucleoside triphosphate pyrophosphatase from Thermosynechococcus vestitus (strain NIES-2133 / IAM M-273 / BP-1).